Reading from the N-terminus, the 350-residue chain is S-adenosylmethionine:tRNA ribosyltransferase-isomerase (350 aa).

It belongs to the QueA family. In terms of assembly, monomer.

It localises to the cytoplasm. It carries out the reaction 7-aminomethyl-7-carbaguanosine(34) in tRNA + S-adenosyl-L-methionine = epoxyqueuosine(34) in tRNA + adenine + L-methionine + 2 H(+). Its pathway is tRNA modification; tRNA-queuosine biosynthesis. Its function is as follows. Transfers and isomerizes the ribose moiety from AdoMet to the 7-aminomethyl group of 7-deazaguanine (preQ1-tRNA) to give epoxyqueuosine (oQ-tRNA). The chain is S-adenosylmethionine:tRNA ribosyltransferase-isomerase from Bacillus cereus (strain G9842).